Consider the following 350-residue polypeptide: D-alanine--D-alanine ligase (350 aa).

The ATP-grasp domain occupies 135–335; the sequence is KLYAKNLGVK…LAQSLPKTPK (201 aa). 164–219 is an ATP binding site; sequence KPSFNFPFIVKPNNAGSSLGVSVVKEEKELAYALDGAFEYSKEVLIEPFIQRVKEY. Residues Asp-291, Glu-303, and Asn-305 each contribute to the Mg(2+) site.

This sequence belongs to the D-alanine--D-alanine ligase family. It depends on Mg(2+) as a cofactor. Requires Mn(2+) as cofactor.

It localises to the cytoplasm. It catalyses the reaction 2 D-alanine + ATP = D-alanyl-D-alanine + ADP + phosphate + H(+). It participates in cell wall biogenesis; peptidoglycan biosynthesis. Cell wall formation. This Helicobacter acinonychis (strain Sheeba) protein is D-alanine--D-alanine ligase.